Here is a 102-residue protein sequence, read N- to C-terminus: NADH-quinone oxidoreductase subunit K 1 (102 aa).

3 helical membrane passes run 5 to 25, 31 to 51, and 65 to 85; these read ISHY…GIFL, IIIL…MVAF, and LFIL…LVVF.

This sequence belongs to the complex I subunit 4L family. NDH-1 is composed of 14 different subunits. Subunits NuoA, H, J, K, L, M, N constitute the membrane sector of the complex.

The protein localises to the cell inner membrane. The enzyme catalyses a quinone + NADH + 5 H(+)(in) = a quinol + NAD(+) + 4 H(+)(out). Functionally, NDH-1 shuttles electrons from NADH, via FMN and iron-sulfur (Fe-S) centers, to quinones in the respiratory chain. The immediate electron acceptor for the enzyme in this species is believed to be ubiquinone. Couples the redox reaction to proton translocation (for every two electrons transferred, four hydrogen ions are translocated across the cytoplasmic membrane), and thus conserves the redox energy in a proton gradient. This chain is NADH-quinone oxidoreductase subunit K 1, found in Rhizobium meliloti (strain 1021) (Ensifer meliloti).